The primary structure comprises 423 residues: Replication factor C large subunit (423 aa).

50–57 (GPAGCGKT) is a binding site for ATP.

It belongs to the activator 1 small subunits family. RfcL subfamily. Heteromultimer composed of small subunits (RfcS) and large subunits (RfcL).

Functionally, part of the RFC clamp loader complex which loads the PCNA sliding clamp onto DNA. The sequence is that of Replication factor C large subunit from Staphylothermus marinus (strain ATCC 43588 / DSM 3639 / JCM 9404 / F1).